The following is a 413-amino-acid chain: MSILSTLDPEVADAIRLEADRQEYNLELIASENFVSTAVLEAQGSVLTNKYAEGYPGKRYYGGCHNVDIVEALAIERAKQLFDAEHANVQPHSGSQANMAVYFSALKPGDTILGMNLSHGGHLTHGSPVNFSGRFFNVVPYGVSPETQTIDYAEVERLALEHKPKMIVVGASAYPRTIDFAAFRAIADKVGALVMVDMAHIAGLVAAGLHPSPIPHAEFVTTTTHKTLRGPRGGMILCQERFAKSINSQIFPGIQGGPLMHVIAAKAVAFKEALQPEFKQYQQQVVNNARTLAEELVKRGFKLTSGGTDNHLMLLDFSGTEITGKAAEEALDKAGITANKNTVPFETRSPFVTSGIRIGTPAATTHGLKEAEMVLVAGFIADAVANIGSDETLAAIKLQVNQLMKKFPLYAKG.

Residues Leu117 and 121–123 each bind (6S)-5,6,7,8-tetrahydrofolate; that span reads GHL. The residue at position 226 (Lys226) is an N6-(pyridoxal phosphate)lysine. 349–351 is a (6S)-5,6,7,8-tetrahydrofolate binding site; that stretch reads SPF.

Belongs to the SHMT family. As to quaternary structure, homodimer. Requires pyridoxal 5'-phosphate as cofactor.

It localises to the cytoplasm. The enzyme catalyses (6R)-5,10-methylene-5,6,7,8-tetrahydrofolate + glycine + H2O = (6S)-5,6,7,8-tetrahydrofolate + L-serine. Its pathway is one-carbon metabolism; tetrahydrofolate interconversion. The protein operates within amino-acid biosynthesis; glycine biosynthesis; glycine from L-serine: step 1/1. Catalyzes the reversible interconversion of serine and glycine with tetrahydrofolate (THF) serving as the one-carbon carrier. This reaction serves as the major source of one-carbon groups required for the biosynthesis of purines, thymidylate, methionine, and other important biomolecules. Also exhibits THF-independent aldolase activity toward beta-hydroxyamino acids, producing glycine and aldehydes, via a retro-aldol mechanism. This chain is Serine hydroxymethyltransferase, found in Pelobacter propionicus (strain DSM 2379 / NBRC 103807 / OttBd1).